The sequence spans 157 residues: MLRISARFYCKIATQSSFKAAEYKNKIKKDKKLNFTQLLHPTKVPQTPVPAAFSDPSENVVEIDTKTIQLLERLSLVDLDSDQALATLKSSIQFADKIAHIDTQNVRPLYTVLEKQQLQLRNDQVTAGDSRAELLRCAKVTDEDYYVSPPGNIPLEQ.

Belongs to the GatC family. In terms of assembly, subunit of the heterotrimeric GatCAB amidotransferase (AdT) complex, composed of A, B and C subunits.

It localises to the mitochondrion. It catalyses the reaction L-glutamyl-tRNA(Gln) + L-glutamine + ATP + H2O = L-glutaminyl-tRNA(Gln) + L-glutamate + ADP + phosphate + H(+). Functionally, allows the formation of correctly charged Gln-tRNA(Gln) through the transamidation of misacylated Glu-tRNA(Gln) in the mitochondria. The reaction takes place in the presence of glutamine and ATP through an activated gamma-phospho-Glu-tRNA(Gln). This chain is Glutamyl-tRNA(Gln) amidotransferase subunit C, mitochondrial, found in Drosophila virilis (Fruit fly).